Reading from the N-terminus, the 238-residue chain is Probable transcriptional regulatory protein YeeN (238 aa).

This sequence belongs to the TACO1 family. YeeN subfamily.

The protein localises to the cytoplasm. In Salmonella choleraesuis (strain SC-B67), this protein is Probable transcriptional regulatory protein YeeN.